The sequence spans 350 residues: Hepatocyte nuclear factor 3-gamma (350 aa).

Residues 116 to 207 (AKPPYSYISL…GNMFENGCYL (92 aa)) constitute a DNA-binding region (fork-head). The interval 217 to 276 (EKVKKGGSGAATTTRNGTGSAASTTTPAATVTSPPQPPPPAPEPEAQGGEDVGALDCGSP) is disordered. Residues 226–249 (AATTTRNGTGSAASTTTPAATVTS) show a composition bias toward low complexity. The segment covering 250–259 (PPQPPPPAPE) has biased composition (pro residues).

Interacts with FOXA2. As to expression, expressed in erythroleukemia and hepatoma cell lines and in liver and pancreas. Not expressed in any other cell lines or tissues examined.

The protein localises to the nucleus. Its function is as follows. Transcription factor that is thought to act as a 'pioneer' factor opening the compacted chromatin for other proteins through interactions with nucleosomal core histones and thereby replacing linker histones at target enhancer and/or promoter sites. Originally described as a transcription activator for a number of liver genes such as AFP, albumin, tyrosine aminotransferase, PEPCK, etc. Interacts with the cis-acting regulatory regions of these genes. Involved in glucose homeostasis; binds to and activates transcription from the G6PC1 promoter. Binds to the CYP3A4 promoter and activates its transcription in cooperation with CEBPA. Binds to the CYP3A7 promoter together with members of the CTF/NF-I family. Involved in regulation of neuronal-specific transcription. May be involved in regulation of spermatogenesis. This is Hepatocyte nuclear factor 3-gamma (FOXA3) from Homo sapiens (Human).